A 185-amino-acid polypeptide reads, in one-letter code: Ribosome-recycling factor (185 aa).

This sequence belongs to the RRF family.

It is found in the cytoplasm. Responsible for the release of ribosomes from messenger RNA at the termination of protein biosynthesis. May increase the efficiency of translation by recycling ribosomes from one round of translation to another. The sequence is that of Ribosome-recycling factor from Macrococcus caseolyticus (strain JCSC5402) (Macrococcoides caseolyticum).